The primary structure comprises 207 residues: Chloramphenicol acetyltransferase (207 aa).

His186 acts as the Proton acceptor in catalysis.

It belongs to the chloramphenicol acetyltransferase family. In terms of assembly, homotrimer.

The catalysed reaction is chloramphenicol + acetyl-CoA = chloramphenicol 3-acetate + CoA. Its function is as follows. This enzyme is an effector of chloramphenicol resistance in bacteria. The polypeptide is Chloramphenicol acetyltransferase (catP) (Clostridium perfringens).